The sequence spans 447 residues: 3-phosphoshikimate 1-carboxyvinyltransferase (447 aa).

3-phosphoshikimate contacts are provided by lysine 36, serine 37, and arginine 41. Phosphoenolpyruvate is bound at residue lysine 36. Residues glycine 109 and arginine 138 each contribute to the phosphoenolpyruvate site. Positions 183, 185, 333, and 360 each coordinate 3-phosphoshikimate. Phosphoenolpyruvate is bound at residue glutamine 185. Aspartate 333 acts as the Proton acceptor in catalysis. 2 residues coordinate phosphoenolpyruvate: arginine 364 and arginine 406.

Belongs to the EPSP synthase family. As to quaternary structure, monomer.

The protein localises to the cytoplasm. The catalysed reaction is 3-phosphoshikimate + phosphoenolpyruvate = 5-O-(1-carboxyvinyl)-3-phosphoshikimate + phosphate. It functions in the pathway metabolic intermediate biosynthesis; chorismate biosynthesis; chorismate from D-erythrose 4-phosphate and phosphoenolpyruvate: step 6/7. Its function is as follows. Catalyzes the transfer of the enolpyruvyl moiety of phosphoenolpyruvate (PEP) to the 5-hydroxyl of shikimate-3-phosphate (S3P) to produce enolpyruvyl shikimate-3-phosphate and inorganic phosphate. This Synechocystis sp. (strain ATCC 27184 / PCC 6803 / Kazusa) protein is 3-phosphoshikimate 1-carboxyvinyltransferase.